We begin with the raw amino-acid sequence, 235 residues long: 2,3,4,5-tetrahydropyridine-2,6-dicarboxylate N-acetyltransferase (235 aa).

The protein belongs to the transferase hexapeptide repeat family. DapH subfamily.

It catalyses the reaction (S)-2,3,4,5-tetrahydrodipicolinate + acetyl-CoA + H2O = L-2-acetamido-6-oxoheptanedioate + CoA. It participates in amino-acid biosynthesis; L-lysine biosynthesis via DAP pathway; LL-2,6-diaminopimelate from (S)-tetrahydrodipicolinate (acetylase route): step 1/3. In terms of biological role, catalyzes the transfer of an acetyl group from acetyl-CoA to tetrahydrodipicolinate. This Anoxybacillus flavithermus (strain DSM 21510 / WK1) protein is 2,3,4,5-tetrahydropyridine-2,6-dicarboxylate N-acetyltransferase.